Consider the following 412-residue polypeptide: L-threonine:uridine-5'-aldehyde transaldolase (412 aa).

N6-(pyridoxal phosphate)lysine is present on lysine 229.

Belongs to the SHMT family. Pyridoxal 5'-phosphate is required as a cofactor.

It carries out the reaction uridine-5'-aldehyde + L-threonine = (5'S,6'S)-C-glycyluridine + acetaldehyde. Its pathway is antibiotic biosynthesis. In terms of biological role, transaldolase involved in the biosynthesis of the capuramycin-type nucleoside antibiotic A-102395. Catalyzes the condensation of L-threonine and uridine-5'-aldehyde to form 5'-C-glycyluridine (GlyU). The protein is L-threonine:uridine-5'-aldehyde transaldolase of Amycolatopsis sp.